The sequence spans 435 residues: Enolase (435 aa).

Glutamine 163 contributes to the (2R)-2-phosphoglycerate binding site. Glutamate 205 (proton donor) is an active-site residue. Mg(2+) is bound by residues aspartate 243, glutamate 292, and aspartate 319. (2R)-2-phosphoglycerate-binding residues include lysine 344, arginine 373, serine 374, and lysine 395. Residue lysine 344 is the Proton acceptor of the active site.

This sequence belongs to the enolase family. The cofactor is Mg(2+).

It localises to the cytoplasm. The protein localises to the secreted. Its subcellular location is the cell surface. The enzyme catalyses (2R)-2-phosphoglycerate = phosphoenolpyruvate + H2O. The protein operates within carbohydrate degradation; glycolysis; pyruvate from D-glyceraldehyde 3-phosphate: step 4/5. Its function is as follows. Catalyzes the reversible conversion of 2-phosphoglycerate (2-PG) into phosphoenolpyruvate (PEP). It is essential for the degradation of carbohydrates via glycolysis. In Streptococcus agalactiae serotype Ia (strain ATCC 27591 / A909 / CDC SS700), this protein is Enolase.